The following is a 474-amino-acid chain: Ankyrin repeat, SAM and basic leucine zipper domain-containing protein 1 (474 aa).

Residues 1 to 31 (MAGRLRGPAVPGGGESSDSDEDGWDIGYTER) form a disordered region. 3 positions are modified to phosphoserine: Ser-16, Ser-17, and Ser-19. 6 ANK repeats span residues 43–72 (EKDE…QVDS), 76–105 (FGWT…NASF), 108–142 (DQHT…SPNA), 146–175 (KRMS…EINA), 179–208 (NGYT…DKTL), and 212–241 (DGKT…PLHG). One can recognise an SAM domain in the interval 270–333 (SYSAFGDLEI…KIMDAVEELQ (64 aa)).

As to quaternary structure, interacts with DDX4, PIWIL1, RANBP9 and TDRD1.

The protein localises to the cytoplasm. Functionally, plays a central role during spermatogenesis by repressing transposable elements and preventing their mobilization, which is essential for the germline integrity. Acts via the piRNA metabolic process, which mediates the repression of transposable elements during meiosis by forming complexes composed of piRNAs and Piwi proteins and governs the methylation and subsequent repression of transposons. Its association with pi-bodies suggests a participation in the primary piRNAs metabolic process. Required prior to the pachytene stage to facilitate the production of multiple types of piRNAs, including those associated with repeats involved in the regulation of retrotransposons. May act by mediating protein-protein interactions during germ cell maturation. This is Ankyrin repeat, SAM and basic leucine zipper domain-containing protein 1 (ASZ1) from Ornithorhynchus anatinus (Duckbill platypus).